A 128-amino-acid polypeptide reads, in one-letter code: MSKPKRERSLPENEAKAIARMLRVSPQKLNLVAQLIRGRKASAALADLQFSRKRIAGDVKKCLESAIANAENNHDLDVDELIVSEAFVGNGMVMKRFAPRGRGRSGRIYKPFSQLTIVVRQVEAEASA.

It belongs to the universal ribosomal protein uL22 family. As to quaternary structure, part of the 50S ribosomal subunit.

Functionally, this protein binds specifically to 23S rRNA; its binding is stimulated by other ribosomal proteins, e.g. L4, L17, and L20. It is important during the early stages of 50S assembly. It makes multiple contacts with different domains of the 23S rRNA in the assembled 50S subunit and ribosome. In terms of biological role, the globular domain of the protein is located near the polypeptide exit tunnel on the outside of the subunit, while an extended beta-hairpin is found that lines the wall of the exit tunnel in the center of the 70S ribosome. The sequence is that of Large ribosomal subunit protein uL22 from Nitrobacter winogradskyi (strain ATCC 25391 / DSM 10237 / CIP 104748 / NCIMB 11846 / Nb-255).